Here is a 323-residue protein sequence, read N- to C-terminus: Caspase-1 (323 aa).

Positions 1-33 (MTDECVTRNYGVGIRSPNGSENRGSFIMADNTD) are excised as a propeptide. Residues H154 and C196 contribute to the active site. Positions 203–215 (GGITLEKGVTETD) are excised as a propeptide.

Belongs to the peptidase C14A family. As to quaternary structure, heterotetramer that consists of two anti-parallel arranged heterodimers, each one formed by a 22 kDa (p22) and a 13 kDa (p13) subunit.

In terms of biological role, involved in the activation cascade of caspases responsible for apoptosis execution. Proteolytically cleaves poly(ADP-ribose) polymerase (PARP). Loss of zygotic DCP-1 function causes larval lethality and melanotic tumors. The chain is Caspase-1 (Dcp-1) from Drosophila melanogaster (Fruit fly).